The chain runs to 421 residues: FBD-associated F-box protein At5g56370 (421 aa).

The region spanning M1–N52 is the F-box domain. An FBD domain is found at H332–P382.

The sequence is that of FBD-associated F-box protein At5g56370 from Arabidopsis thaliana (Mouse-ear cress).